Here is a 243-residue protein sequence, read N- to C-terminus: MYQHIVVLTGAGISAESGLRTFRDQDGLWEEHHIEDVATPEGYAKDAELVERFYNSRWEQLHCGTVMPNAAHLALAKLEAEFSGQLLVVTQNIDDLHERAGSRRLLHMHGELSKGRCPRSRQTFLLREPFGVNNGCTCCIPAQRLRPHVVWFGEMPLGMDRIHDALDNCDLFIAIGTSGTVYPAAGFVDTANHHGAQTVEVNLQSPDRHSQFQYHLTGRAGELVPKLVDTILAGRVIGSDLAE.

A Deacetylase sirtuin-type domain is found at Met1–Gly234. Position 10 to 29 (Gly10 to Trp29) interacts with NAD(+). 2 residues coordinate substrate: Tyr54 and Arg57. Gln91 to Asp94 lines the NAD(+) pocket. His109 (proton acceptor) is an active-site residue. Residues Cys117 and Cys136 each coordinate Zn(2+). NAD(+) contacts are provided by residues Gly176–Ser178, Asn202–Gln204, and Ala220.

The protein belongs to the sirtuin family. Class III subfamily. Requires Zn(2+) as cofactor.

It localises to the cytoplasm. The enzyme catalyses N(6)-acetyl-L-lysyl-[protein] + NAD(+) + H2O = 2''-O-acetyl-ADP-D-ribose + nicotinamide + L-lysyl-[protein]. It carries out the reaction N(6)-succinyl-L-lysyl-[protein] + NAD(+) + H2O = 2''-O-succinyl-ADP-D-ribose + nicotinamide + L-lysyl-[protein]. Its function is as follows. NAD-dependent lysine deacetylase and desuccinylase that specifically removes acetyl and succinyl groups on target proteins. Modulates the activities of several proteins which are inactive in their acylated form. This chain is NAD-dependent protein deacylase, found in Shewanella oneidensis (strain ATCC 700550 / JCM 31522 / CIP 106686 / LMG 19005 / NCIMB 14063 / MR-1).